Here is a 446-residue protein sequence, read N- to C-terminus: Transcription factor Dp-2 (446 aa).

An N-acetylthreonine modification is found at Thr2. Phosphoserine; by CDK2 is present on residues Ser24 and Ser42. The interaction with CEBPA stretch occupies residues 60 to 82 (PQMIISTPQRIANSGSVLIGNPY). A Nuclear localization signal motif is present at residues 103–118 (SDRKRAREFIDSDFSE). Phosphoserine is present on Ser122. A DNA-binding region spans residues 129–210 (GKGLRHFSMK…PTGKKRNQVD (82 aa)). The DEF box signature appears at 176–210 (DQENIRRRVYDALNVLMAMNIISSLPTGKKRNQVD). Residues 219 to 292 (NLEIEKQRRI…RKTVIDCSIS (74 aa)) form a dimerization region. The interval 229-261 (ERIKQKRAQLQELLLQQIAFKNLVQRNRQNEQQ) is DCB1. Residues 274-330 (LPFIIINTSRKTVIDCSISSDKFEYLFNFDNTFEIHDDIEVLKRMGMSFGLESGKCS) are DCB2. Residues 404 to 446 (LPASNSHQSSSAASHFSESRGETPCSFNDEDEEDEEEDPSSPE) form a disordered region. Positions 406–419 (ASNSHQSSSAASHF) are enriched in low complexity. Acidic residues predominate over residues 431 to 446 (NDEDEEDEEEDPSSPE).

It belongs to the E2F/DP family. In terms of assembly, component of the DRTF1/E2F transcription factor complex. Forms heterodimers with E2F family members. The complex can interact with hypophosphorylated retinoblastoma protein RB1 and related proteins (RBL1 and RBL2) that inhibit the E2F transactivation domain. During the cell cycle, RB becomes phosphorylated in mid-to-late G1 phase, detaches from the DRTF1/E2F complex rendering E2F transcriptionally active. Interacts with GMCL. Component of the DREAM complex (also named LINC complex) at least composed of E2F4, E2F5, LIN9, LIN37, LIN52, LIN54, MYBL1, MYBL2, RBL1, RBL2, RBBP4, TFDP1 and TFDP2. The complex exists in quiescent cells where it represses cell cycle-dependent genes. It dissociates in S phase when LIN9, LIN37, LIN52 and LIN54 form a subcomplex that binds to MYBL2. The complex TFDP2:E2F1 interacts with CEBPA; the interaction prevents CEBPA binding to target gene promoters and represses its transcriptional activity. Post-translationally, phosphorylation by E2F1-bound cyclin A-CDK2, in the S phase, inhibits E2F-mediated DNA binding and transactivation. As to expression, expressed in all tissues examined. Highest levels in spleen and heart.

It localises to the nucleus. Its function is as follows. Can stimulate E2F-dependent transcription. Binds DNA cooperatively with E2F family members through the E2 recognition site, 5'-TTTC[CG]CGC-3', found in the promoter region of a number of genes whose products are involved in cell cycle regulation or in DNA replication. The TFDP2:E2F complex functions in the control of cell-cycle progression from G1 to S phase. The E2F1:DP complex appears to mediate both cell proliferation and apoptosis. Blocks adipocyte differentiation by repressing CEBPA binding to its target gene promoters. The protein is Transcription factor Dp-2 (Tfdp2) of Mus musculus (Mouse).